Consider the following 371-residue polypeptide: DNA replication and repair protein RecF (371 aa).

An ATP-binding site is contributed by 30-37 (GSNGQGKT).

The protein belongs to the RecF family.

The protein resides in the cytoplasm. Functionally, the RecF protein is involved in DNA metabolism; it is required for DNA replication and normal SOS inducibility. RecF binds preferentially to single-stranded, linear DNA. It also seems to bind ATP. The sequence is that of DNA replication and repair protein RecF from Acidothermus cellulolyticus (strain ATCC 43068 / DSM 8971 / 11B).